The following is a 315-amino-acid chain: Transcription factor MafAa (315 aa).

Over residues 52–104 (STPISTPCSSVPSSPSFCAPSPGSQPGQNLVNGVNNNNNNSGNGNNNTQGSSG) the composition is skewed to low complexity. 2 disordered regions span residues 52–108 (STPI…KPQM) and 169–191 (ATNGHHHPVHHHHHHHGHHAHAR). Basic residues predominate over residues 172–189 (GHHHPVHHHHHHHGHHAH). The segment at 223–248 (RLKQKRRTLKNRGYAQSCRYKRVQQR) is basic motif. A bZIP domain is found at 223–286 (RLKQKRRTLK…DLYKEKYEKL (64 aa)). Positions 229-243 (RTLKNRGYAQSCRYK) are interaction with DNA. Residues 251–272 (LESEKCTLQSQVEQLKQDVARL) form a leucine-zipper region. Residues 290–315 (AFNGGGNTRDPSSGNHVKTTSTDFFM) form a disordered region. A compositionally biased stretch (polar residues) spans 298–315 (RDPSSGNHVKTTSTDFFM).

The protein belongs to the bZIP family. Maf subfamily.

It is found in the nucleus. Functionally, transcription factor, possibly involved in transcription regulation during lens development, including that of crystallin genes. Specifically binds to the alphaCE2 enhancer element of crystallin gene. In Danio rerio (Zebrafish), this protein is Transcription factor MafAa (mafaa).